Here is a 142-residue protein sequence, read N- to C-terminus: Large ribosomal subunit protein uL13 (142 aa).

It belongs to the universal ribosomal protein uL13 family. As to quaternary structure, part of the 50S ribosomal subunit.

This protein is one of the early assembly proteins of the 50S ribosomal subunit, although it is not seen to bind rRNA by itself. It is important during the early stages of 50S assembly. The polypeptide is Large ribosomal subunit protein uL13 (Actinobacillus pleuropneumoniae serotype 5b (strain L20)).